Reading from the N-terminus, the 400-residue chain is Endophilin-B2 (400 aa).

At methionine 1 the chain carries N-acetylmethionine. The interval 1–27 (MDFNMKKLASDAGIFFTRAVQFTEEKF) is membrane-binding amphipathic helix. Serine 10 carries the post-translational modification Phosphoserine. The 264-residue stretch at 24–287 (EEKFGQAEKT…LGSSQGAIFP (264 aa)) folds into the BAR domain. Positions 205–234 (SASALWNDEVDKAEQELRVAQTEFDRQAEV) form a coiled coil. One can recognise an SH3 domain in the interval 340–400 (SGTRKARVLY…VPVTYLELLS (61 aa)). Phosphoserine is present on serine 400.

It belongs to the endophilin family. In terms of assembly, homodimer, and heterodimer with SH3GLB1.

It is found in the cytoplasm. This Mus musculus (Mouse) protein is Endophilin-B2 (Sh3glb2).